A 549-amino-acid polypeptide reads, in one-letter code: Chaperonin GroEL (549 aa).

ATP contacts are provided by residues 29 to 32 (TLGP), Lys-50, 86 to 90 (DGTTT), Gly-413, 479 to 481 (NAA), and Asp-496. A disordered region spans residues 522 to 549 (VSDKPEKPQQGGQGGGGMGGGDMGGMDF). Positions 532 to 549 (GGQGGGGMGGGDMGGMDF) are enriched in gly residues.

It belongs to the chaperonin (HSP60) family. In terms of assembly, forms a cylinder of 14 subunits composed of two heptameric rings stacked back-to-back. Interacts with the co-chaperonin GroES.

The protein resides in the cytoplasm. It carries out the reaction ATP + H2O + a folded polypeptide = ADP + phosphate + an unfolded polypeptide.. In terms of biological role, together with its co-chaperonin GroES, plays an essential role in assisting protein folding. The GroEL-GroES system forms a nano-cage that allows encapsulation of the non-native substrate proteins and provides a physical environment optimized to promote and accelerate protein folding. The protein is Chaperonin GroEL of Deinococcus deserti (strain DSM 17065 / CIP 109153 / LMG 22923 / VCD115).